A 373-amino-acid polypeptide reads, in one-letter code: CASP-like protein UU6 (373 aa).

2 disordered regions span residues 1-100 (MGTL…GSEG) and 172-195 (TKET…PKKK). The Cytoplasmic segment spans residues 1-204 (MGTLTDPTVD…KHRLRKHLTA (204 aa)). Positions 56 to 74 (KTNTGNAAESTASTENGET) are enriched in polar residues. The helical transmembrane segment at 205-225 (IGAYSFAFRFSETVLSLIAIV) threads the bilayer. The Extracellular segment spans residues 226–253 (VMCSTRGSMRTDGVDFGTLKFNHFQAYR). Residues 254–274 (YLVAVNVIVFVYSTFQFIQLL) traverse the membrane as a helical segment. Topologically, residues 275–276 (YT) are cytoplasmic. Residues 277–297 (VILGISFIPSIFISTWMTFGF) form a helical membrane-spanning segment. Topologically, residues 298-342 (DQLFLYLLLSASTSAATVANMSYTGEMGIQLCSRFDVGSFCSKAD) are extracellular. N-linked (GlcNAc...) asparagine glycosylation occurs at Asn-317. The chain crosses the membrane as a helical span at residues 343-363 (VAVTMSFFAVLAMLSSTILAI). Over 364 to 373 (YRIAVLLREY) the chain is Cytoplasmic.

This sequence belongs to the Casparian strip membrane proteins (CASP) family. As to quaternary structure, homodimer and heterodimers.

The protein resides in the cell membrane. The protein is CASP-like protein UU6 of Physcomitrium patens (Spreading-leaved earth moss).